The chain runs to 187 residues: Large ribosomal subunit protein uL10 (187 aa).

It belongs to the universal ribosomal protein uL10 family. Part of the ribosomal stalk of the 50S ribosomal subunit. The N-terminus interacts with L11 and the large rRNA to form the base of the stalk. The C-terminus forms an elongated spine to which L12 dimers bind in a sequential fashion forming a multimeric L10(L12)X complex.

Its function is as follows. Forms part of the ribosomal stalk, playing a central role in the interaction of the ribosome with GTP-bound translation factors. The chain is Large ribosomal subunit protein uL10 from Roseiflexus castenholzii (strain DSM 13941 / HLO8).